A 350-amino-acid polypeptide reads, in one-letter code: MKKSGWLVVALIALVVLGVVTSIAVNVYFKDKLVQGITVQMEDEGGKPISANLIINELTDEGPKKIWSGSGPGIVATSLILPKEEVNTFEINGEKIRVYRSINLEVIAYTEGKMGVAIFSVDPARPEHKSVKIVLRDVPKTKSEPTPGVWTTYEFTPVLKFATWDDIFAKYGYPRGAKIRIESKTRPYGSPTWVSGYTEVTLDSGLFSPYLSGKNKYTVYFQIKYVYAITELEMGEEKIYYERVYAVDTNTDPVAGYRDYVSWHGNLPANYDEYYITPAGDTREIAITGGHDYAFSVSVGFSYPAGITVALGVTKVPSPPATLSVTSTRSDGWVKTAGFNGFIESYSNWI.

The N-terminal stretch at 1-26 (MKKSGWLVVALIALVVLGVVTSIAVN) is a signal peptide.

This is an uncharacterized protein from Archaeoglobus fulgidus (strain ATCC 49558 / DSM 4304 / JCM 9628 / NBRC 100126 / VC-16).